The following is a 585-amino-acid chain: Glutamine--tRNA ligase (585 aa).

The 'HIGH' region motif lies at 51–61 (PEPNGYLHIGH). Residues 52–54 (EPN) and 58–64 (HIGHAKS) each bind ATP. 2 residues coordinate L-glutamine: D84 and Y238. ATP contacts are provided by residues T257 and 292–293 (RL). Residues 299–303 (ITSKR) carry the 'KMSKS' region motif.

This sequence belongs to the class-I aminoacyl-tRNA synthetase family. As to quaternary structure, monomer.

It is found in the cytoplasm. It catalyses the reaction tRNA(Gln) + L-glutamine + ATP = L-glutaminyl-tRNA(Gln) + AMP + diphosphate. This chain is Glutamine--tRNA ligase, found in Cupriavidus necator (strain ATCC 17699 / DSM 428 / KCTC 22496 / NCIMB 10442 / H16 / Stanier 337) (Ralstonia eutropha).